Consider the following 448-residue polypeptide: Exodeoxyribonuclease 7 large subunit (448 aa).

It belongs to the XseA family. Heterooligomer composed of large and small subunits.

It localises to the cytoplasm. The enzyme catalyses Exonucleolytic cleavage in either 5'- to 3'- or 3'- to 5'-direction to yield nucleoside 5'-phosphates.. Bidirectionally degrades single-stranded DNA into large acid-insoluble oligonucleotides, which are then degraded further into small acid-soluble oligonucleotides. The protein is Exodeoxyribonuclease 7 large subunit of Shewanella baltica (strain OS185).